Reading from the N-terminus, the 188-residue chain is CASP-like protein 4B1 (188 aa).

The segment at 1 to 34 is disordered; that stretch reads MTNPDNMKPVEATDVESAAEKTSEPTPASGTSTI. Residues 1-46 lie on the Cytoplasmic side of the membrane; sequence MTNPDNMKPVEATDVESAAEKTSEPTPASGTSTITQRWKREDLIKK. Polar residues predominate over residues 24-34; it reads EPTPASGTSTI. A helical transmembrane segment spans residues 47–67; the sequence is ASPITRGICLLFSLIAFLIMV. The Extracellular portion of the chain corresponds to 68–84; sequence SNKHGYGRNFNDYEEYR. The chain crosses the membrane as a helical span at residues 85-105; sequence YVLAISIISTLYTAWQTFAHF. The Cytoplasmic segment spans residues 106–124; sequence SKREIFDRRTSILVDFSGD. The helical transmembrane segment at 125-145 threads the bilayer; sequence QIVAYLLISAASSAIPLTNIF. At 146–156 the chain is on the extracellular side; sequence REGQDNIFTDS. Residues 157-177 traverse the membrane as a helical segment; the sequence is AASAISMAIFAFIALALSALF. At 178-188 the chain is on the cytoplasmic side; that stretch reads SGYKLSTHSFI.

This sequence belongs to the Casparian strip membrane proteins (CASP) family. In terms of assembly, homodimer and heterodimers.

The protein resides in the cell membrane. The polypeptide is CASP-like protein 4B1 (Arabidopsis thaliana (Mouse-ear cress)).